The sequence spans 327 residues: 2-phosphoglycerate kinase (327 aa).

Residues Met1 to Arg20 show a composition bias toward basic and acidic residues. Residues Met1 to Ile27 are disordered. The ATP-cone domain maps to Arg25–Glu111.

This sequence belongs to the 2-phosphoglycerate kinase family. The cofactor is a divalent metal cation.

It carries out the reaction (2R)-2-phosphoglycerate + ATP = (2R)-2,3-bisphosphoglycerate + ADP + H(+). It participates in thermoadapter biosynthesis; cyclic 2,3-diphosphoglycerate biosynthesis; cyclic 2,3-diphosphoglycerate from 2-phospho-D-glycerate: step 1/2. Catalyzes the phosphorylation of 2-phosphoglycerate to 2,3-diphosphoglycerate. Involved in the biosynthesis of cyclic 2,3-bisphosphoglycerate, a thermoprotectant. This is 2-phosphoglycerate kinase from Methanopyrus kandleri (strain AV19 / DSM 6324 / JCM 9639 / NBRC 100938).